Here is a 358-residue protein sequence, read N- to C-terminus: MFNSFGNIFRLTSFGESHGKGVGGVIDGFPSGITIDEEFVQQELNRRRPGQSILTTPRKEADKVEFLSGIFEGKSTGCPIGFIVWNENQHSNDYNNLKEVYRPSHADYTYKVKYGIRDHRGGGRSSARETISRVVAGALAKLALRQLGISITAYTSQVGAIKLEGTYSDYDLDLIETNDVRCPDPEKAKEMADLIYKVKGEGDTIGGTLTCVIKGCPIGLGQPVFGKLHAALGNAMLSINAAKAFEYGEGFKGLKMKGSEQNDVFFNNNGRIETHTNHSGGIQGGISNGQDIYFRVVFKPIATLLMEQETVNIDGVDTTLKARGRHDACVLPRAVPIVEAMAAMTILDYYLLDKTTQL.

Arginine 47 contacts NADP(+). Residues arginine 124–serine 126, asparagine 240–alanine 241, glycine 284, lysine 299–threonine 303, and arginine 325 each bind FMN.

The protein belongs to the chorismate synthase family. Homotetramer. The cofactor is FMNH2.

It carries out the reaction 5-O-(1-carboxyvinyl)-3-phosphoshikimate = chorismate + phosphate. Its pathway is metabolic intermediate biosynthesis; chorismate biosynthesis; chorismate from D-erythrose 4-phosphate and phosphoenolpyruvate: step 7/7. Its function is as follows. Catalyzes the anti-1,4-elimination of the C-3 phosphate and the C-6 proR hydrogen from 5-enolpyruvylshikimate-3-phosphate (EPSP) to yield chorismate, which is the branch point compound that serves as the starting substrate for the three terminal pathways of aromatic amino acid biosynthesis. This reaction introduces a second double bond into the aromatic ring system. This is Chorismate synthase from Bacteroides thetaiotaomicron (strain ATCC 29148 / DSM 2079 / JCM 5827 / CCUG 10774 / NCTC 10582 / VPI-5482 / E50).